A 111-amino-acid polypeptide reads, in one-letter code: Beta-microseminoprotein (111 aa).

An N-terminal signal peptide occupies residues 1 to 20; that stretch reads MKFLLGTLVVLATFVTLCNS. Gln-21 is modified (pyrrolidone carboxylic acid). Cystine bridges form between Cys-22/Cys-67, Cys-35/Cys-59, Cys-54/Cys-90, Cys-57/Cys-66, and Cys-81/Cys-104.

This sequence belongs to the beta-microseminoprotein family. As to quaternary structure, homodimer; Interacts with PI16. As to expression, corpora lutea, mostly in the luteal cells surrounding blood vessels.

The protein localises to the secreted. The protein is Beta-microseminoprotein (MSMB) of Sus scrofa (Pig).